Reading from the N-terminus, the 178-residue chain is ATP synthase subunit delta (178 aa).

It belongs to the ATPase delta chain family. In terms of assembly, F-type ATPases have 2 components, F(1) - the catalytic core - and F(0) - the membrane proton channel. F(1) has five subunits: alpha(3), beta(3), gamma(1), delta(1), epsilon(1). F(0) has three main subunits: a(1), b(2) and c(10-14). The alpha and beta chains form an alternating ring which encloses part of the gamma chain. F(1) is attached to F(0) by a central stalk formed by the gamma and epsilon chains, while a peripheral stalk is formed by the delta and b chains.

The protein localises to the cell inner membrane. F(1)F(0) ATP synthase produces ATP from ADP in the presence of a proton or sodium gradient. F-type ATPases consist of two structural domains, F(1) containing the extramembraneous catalytic core and F(0) containing the membrane proton channel, linked together by a central stalk and a peripheral stalk. During catalysis, ATP synthesis in the catalytic domain of F(1) is coupled via a rotary mechanism of the central stalk subunits to proton translocation. In terms of biological role, this protein is part of the stalk that links CF(0) to CF(1). It either transmits conformational changes from CF(0) to CF(1) or is implicated in proton conduction. The sequence is that of ATP synthase subunit delta from Pseudomonas entomophila (strain L48).